A 104-amino-acid chain; its full sequence is Large ribosomal subunit protein uL24 (104 aa).

The protein belongs to the universal ribosomal protein uL24 family. As to quaternary structure, part of the 50S ribosomal subunit.

One of two assembly initiator proteins, it binds directly to the 5'-end of the 23S rRNA, where it nucleates assembly of the 50S subunit. Its function is as follows. One of the proteins that surrounds the polypeptide exit tunnel on the outside of the subunit. This is Large ribosomal subunit protein uL24 from Enterobacter sp. (strain 638).